An 884-amino-acid chain; its full sequence is Alanine--tRNA ligase (884 aa).

4 residues coordinate Zn(2+): His-574, His-578, Cys-675, and His-679.

It belongs to the class-II aminoacyl-tRNA synthetase family. Requires Zn(2+) as cofactor.

The protein resides in the cytoplasm. The catalysed reaction is tRNA(Ala) + L-alanine + ATP = L-alanyl-tRNA(Ala) + AMP + diphosphate. Its function is as follows. Catalyzes the attachment of alanine to tRNA(Ala) in a two-step reaction: alanine is first activated by ATP to form Ala-AMP and then transferred to the acceptor end of tRNA(Ala). Also edits incorrectly charged Ser-tRNA(Ala) and Gly-tRNA(Ala) via its editing domain. The protein is Alanine--tRNA ligase of Ralstonia nicotianae (strain ATCC BAA-1114 / GMI1000) (Ralstonia solanacearum).